We begin with the raw amino-acid sequence, 106 residues long: Glutaredoxin-1 (106 aa).

A2 bears the N-acetylalanine mark. One can recognise a Glutaredoxin domain in the interval 3 to 106 (QAFVNSKIQP…TRLKQMGALQ (104 aa)). K9 is subject to N6-succinyllysine. Intrachain disulfides connect C23–C26 and C79–C83.

It belongs to the glutaredoxin family.

The protein localises to the cytoplasm. In terms of biological role, has a glutathione-disulfide oxidoreductase activity in the presence of NADPH and glutathione reductase. Reduces low molecular weight disulfides and proteins. This Bos taurus (Bovine) protein is Glutaredoxin-1 (GLRX).